The following is a 262-amino-acid chain: Tryptophan synthase alpha chain (262 aa).

Active-site proton acceptor residues include E49 and D60.

The protein belongs to the TrpA family. In terms of assembly, tetramer of two alpha and two beta chains.

The catalysed reaction is (1S,2R)-1-C-(indol-3-yl)glycerol 3-phosphate + L-serine = D-glyceraldehyde 3-phosphate + L-tryptophan + H2O. It functions in the pathway amino-acid biosynthesis; L-tryptophan biosynthesis; L-tryptophan from chorismate: step 5/5. The alpha subunit is responsible for the aldol cleavage of indoleglycerol phosphate to indole and glyceraldehyde 3-phosphate. The sequence is that of Tryptophan synthase alpha chain from Aquifex aeolicus (strain VF5).